We begin with the raw amino-acid sequence, 337 residues long: MIEADRLIAPAAITEEEQLDRAIRPKMLSDYRGQDQVRSQMEIFIEAARRRSEALDHVLIFGPPGLGKTTLANIVANEMGVNIKTTSGPVLEKAGDLAALLTNLEPHDVLFIDEIHRLSPVVEEVLYPAMEDYQLDIMIGEGPAARSIKLELPPFTLIGATTRAGSLTSPLRDRFGIVQRLEFYKVEDLAHIVGRSADVLGLSLDQQGAFEIAKRARGTPRIANRLLRRVRDFAEIRSDGHISDQIAAQALDMLDVDNAGFDYMDRKLLLAIIDKFLGGPVGVDNLAAAIGEEKETIEDVLEPYLIQQGFLQRTPRGRIATPRAYLHFGLTTPERQG.

The large ATPase domain (RuvB-L) stretch occupies residues 4–184; that stretch reads ADRLIAPAAI…FGIVQRLEFY (181 aa). Residues isoleucine 23, arginine 24, glycine 65, lysine 68, threonine 69, threonine 70, 131–133, arginine 174, tyrosine 184, and arginine 221 each bind ATP; that span reads EDY. Threonine 69 is a Mg(2+) binding site. The small ATPAse domain (RuvB-S) stretch occupies residues 185–255; sequence KVEDLAHIVG…IAAQALDMLD (71 aa). Residues 258-337 are head domain (RuvB-H); the sequence is NAGFDYMDRK…FGLTTPERQG (80 aa). The DNA site is built by arginine 313 and arginine 318.

Belongs to the RuvB family. Homohexamer. Forms an RuvA(8)-RuvB(12)-Holliday junction (HJ) complex. HJ DNA is sandwiched between 2 RuvA tetramers; dsDNA enters through RuvA and exits via RuvB. An RuvB hexamer assembles on each DNA strand where it exits the tetramer. Each RuvB hexamer is contacted by two RuvA subunits (via domain III) on 2 adjacent RuvB subunits; this complex drives branch migration. In the full resolvosome a probable DNA-RuvA(4)-RuvB(12)-RuvC(2) complex forms which resolves the HJ.

It localises to the cytoplasm. It catalyses the reaction ATP + H2O = ADP + phosphate + H(+). Its function is as follows. The RuvA-RuvB-RuvC complex processes Holliday junction (HJ) DNA during genetic recombination and DNA repair, while the RuvA-RuvB complex plays an important role in the rescue of blocked DNA replication forks via replication fork reversal (RFR). RuvA specifically binds to HJ cruciform DNA, conferring on it an open structure. The RuvB hexamer acts as an ATP-dependent pump, pulling dsDNA into and through the RuvAB complex. RuvB forms 2 homohexamers on either side of HJ DNA bound by 1 or 2 RuvA tetramers; 4 subunits per hexamer contact DNA at a time. Coordinated motions by a converter formed by DNA-disengaged RuvB subunits stimulates ATP hydrolysis and nucleotide exchange. Immobilization of the converter enables RuvB to convert the ATP-contained energy into a lever motion, pulling 2 nucleotides of DNA out of the RuvA tetramer per ATP hydrolyzed, thus driving DNA branch migration. The RuvB motors rotate together with the DNA substrate, which together with the progressing nucleotide cycle form the mechanistic basis for DNA recombination by continuous HJ branch migration. Branch migration allows RuvC to scan DNA until it finds its consensus sequence, where it cleaves and resolves cruciform DNA. The protein is Holliday junction branch migration complex subunit RuvB of Tolumonas auensis (strain DSM 9187 / NBRC 110442 / TA 4).